The chain runs to 691 residues: Threonine--tRNA ligase (691 aa).

One can recognise a TGS domain in the interval 1–66 (MSAPARPAPA…DADVDVIPVT (66 aa)). Residues 265 to 571 (DHRKLGVELD…LTEHYAGAFP (307 aa)) are catalytic. Zn(2+) is bound by residues Cys370, His421, and His548.

It belongs to the class-II aminoacyl-tRNA synthetase family. In terms of assembly, homodimer. The cofactor is Zn(2+).

The protein localises to the cytoplasm. The catalysed reaction is tRNA(Thr) + L-threonine + ATP = L-threonyl-tRNA(Thr) + AMP + diphosphate + H(+). Catalyzes the attachment of threonine to tRNA(Thr) in a two-step reaction: L-threonine is first activated by ATP to form Thr-AMP and then transferred to the acceptor end of tRNA(Thr). Also edits incorrectly charged L-seryl-tRNA(Thr). This Mycolicibacterium vanbaalenii (strain DSM 7251 / JCM 13017 / BCRC 16820 / KCTC 9966 / NRRL B-24157 / PYR-1) (Mycobacterium vanbaalenii) protein is Threonine--tRNA ligase.